We begin with the raw amino-acid sequence, 553 residues long: Hyaluronan synthase 3 (553 aa).

Residues 1 to 15 (MPVQLTTALRVVGTS) are Cytoplasmic-facing. Residues 16–36 (LFALAVLGGILAAYVTGYQFI) form a helical membrane-spanning segment. Residues 37–44 (HTEKHYLS) are Extracellular-facing. Residues 45-65 (FGLYGAILGLHLLIQSLFAFL) form a helical membrane-spanning segment. Residues 66-377 (EHRRMRRAGQ…NSLWFHKHHL (312 aa)) are Cytoplasmic-facing. Residues 378–398 (WMTYESVVTGFFPFFLIATVI) form a helical membrane-spanning segment. Topologically, residues 399–408 (QLFYRGRIWN) are extracellular. The chain crosses the membrane as a helical span at residues 409–429 (ILLFLLTVQLVGIIKATYACF). The Cytoplasmic segment spans residues 430–440 (LRGNAEMIFMS). A helical transmembrane segment spans residues 441 to 461 (LYSLLYMSSLLPAKIFAIATI). N462 carries an N-linked (GlcNAc...) asparagine glycan. The Extracellular portion of the chain corresponds to 462-473 (NKSGWGTSGRKT). Residues 474-494 (IVVNFIGLIPVSIWVAVLLGG) traverse the membrane as a helical segment. At 495-515 (LAYTAYCQDLFSETELAFLVS) the chain is on the cytoplasmic side. The helical transmembrane segment at 516-536 (GAILYGCYWVALLMLYLAIIA) threads the bilayer. Over 537–553 (RRCGKKPEQYSLAFAEV) the chain is Extracellular.

This sequence belongs to the NodC/HAS family. In terms of assembly, homodimers. Forms heterodimers with HAS2 and HAS1. Requires Mg(2+) as cofactor. Post-translationally, O-GlcNAcylation increases the hyaluronan synthase activity, HAS3 stability and its plasma membrane residence. The concentration of UDP-GlcNAc controls the level of O-GlcNAc modification.

Its subcellular location is the cell membrane. It is found in the golgi apparatus membrane. The protein localises to the golgi apparatus. It localises to the trans-Golgi network membrane. The protein resides in the early endosome. The enzyme catalyses [hyaluronan](n) + UDP-N-acetyl-alpha-D-glucosamine = N-acetyl-beta-D-glucosaminyl-(1-&gt;4)-[hyaluronan](n) + UDP + H(+). The catalysed reaction is N-acetyl-beta-D-glucosaminyl-(1-&gt;4)-[hyaluronan](n) + UDP-alpha-D-glucuronate = [hyaluronan](n+1) + UDP + H(+). It participates in glycan biosynthesis; hyaluronan biosynthesis. With respect to regulation, the enzymatic activity depends on the availability of cytosolic levels of UDP-GlcUA and UDP-GlcNAc. In terms of biological role, catalyzes the addition of GlcNAc or GlcUA monosaccharides to the nascent hyaluronan polymer. Therefore, it is essential to hyaluronan synthesis a major component of most extracellular matrices that has a structural role in tissues architectures and regulates cell adhesion, migration and differentiation. This is one of three isoenzymes responsible for cellular hyaluronan synthesis. The polypeptide is Hyaluronan synthase 3 (Homo sapiens (Human)).